The chain runs to 248 residues: 4-hydroxy-tetrahydrodipicolinate reductase (248 aa).

Residues 8–13, 75–77, and 99–102 each bind NAD(+); these read GAKGRM, GTT, and ATNM. The active-site Proton donor/acceptor is the H131. H132 serves as a coordination point for (S)-2,3,4,5-tetrahydrodipicolinate. K135 (proton donor) is an active-site residue. 141–142 contributes to the (S)-2,3,4,5-tetrahydrodipicolinate binding site; sequence GT.

Belongs to the DapB family.

The protein localises to the cytoplasm. The enzyme catalyses (S)-2,3,4,5-tetrahydrodipicolinate + NAD(+) + H2O = (2S,4S)-4-hydroxy-2,3,4,5-tetrahydrodipicolinate + NADH + H(+). It catalyses the reaction (S)-2,3,4,5-tetrahydrodipicolinate + NADP(+) + H2O = (2S,4S)-4-hydroxy-2,3,4,5-tetrahydrodipicolinate + NADPH + H(+). It participates in amino-acid biosynthesis; L-lysine biosynthesis via DAP pathway; (S)-tetrahydrodipicolinate from L-aspartate: step 4/4. In terms of biological role, catalyzes the conversion of 4-hydroxy-tetrahydrodipicolinate (HTPA) to tetrahydrodipicolinate. In Campylobacter jejuni subsp. doylei (strain ATCC BAA-1458 / RM4099 / 269.97), this protein is 4-hydroxy-tetrahydrodipicolinate reductase.